The primary structure comprises 186 residues: UPF0301 protein HI_0304 (186 aa).

It belongs to the UPF0301 (AlgH) family.

The sequence is that of UPF0301 protein HI_0304 from Haemophilus influenzae (strain ATCC 51907 / DSM 11121 / KW20 / Rd).